The primary structure comprises 248 residues: Probable transcriptional regulatory protein NGR_c27950 (248 aa).

The protein belongs to the TACO1 family.

It localises to the cytoplasm. This is Probable transcriptional regulatory protein NGR_c27950 from Sinorhizobium fredii (strain NBRC 101917 / NGR234).